The primary structure comprises 60 residues: LKCNRLIPPFWKTCPEGKNLCYKMTMRLAPKVPVKRGCIDVCPKSSLLIKYMCCTNDKCN.

4 disulfides stabilise this stretch: Cys3–Cys21, Cys14–Cys38, Cys42–Cys53, and Cys54–Cys59.

Belongs to the three-finger toxin family. Short-chain subfamily. Type IA cytotoxin sub-subfamily. As to quaternary structure, monomer in solution; Homodimer and oligomer in the presence of negatively charged lipids forming a pore with a size ranging between 20 and 30 angstroms. Expressed by the venom gland.

The protein resides in the secreted. The protein localises to the target cell membrane. In terms of biological role, basic protein that binds to cell membrane and depolarizes cardiomyocytes. This cytotoxin also possesses lytic activity on many other cells, including red blood cells. Interaction with sulfatides in the cell membrane induces pore formation and cell internalization and is responsible for cytotoxicity in cardiomyocytes. It targets the mitochondrial membrane and induces mitochondrial swelling and fragmentation. Inhibits protein kinases C. It binds to the integrin alpha-V/beta-3 with a moderate affinity. In Naja nigricollis (Black-necked spitting cobra), this protein is Naniproin.